The following is a 375-amino-acid chain: 4,4'-diaponeurosporenoate glycosyltransferase (375 aa).

Transmembrane regions (helical) follow at residues 3–23, 164–184, 277–297, and 330–350; these read WLSR…ALIF, FYEG…NVFS, IMTA…GLCL, and FSNL…KIFI.

This sequence belongs to the glycosyltransferase 2 family. CrtQ subfamily.

The protein localises to the cell membrane. It functions in the pathway carotenoid biosynthesis; staphyloxanthin biosynthesis; staphyloxanthin from farnesyl diphosphate: step 4/5. Catalyzes the glycosylation of 4,4'-diaponeurosporenoate, i.e. the esterification of glucose at the C1'' position with the carboxyl group of 4,4'-diaponeurosporenic acid, to form glycosyl-4,4'-diaponeurosporenoate. This is a step in the biosynthesis of staphyloxanthin, an orange pigment present in most staphylococci strains. This is 4,4'-diaponeurosporenoate glycosyltransferase (crtQ) from Staphylococcus aureus (strain USA300).